Consider the following 315-residue polypeptide: Glycine--tRNA ligase alpha subunit (315 aa).

This sequence belongs to the class-II aminoacyl-tRNA synthetase family. As to quaternary structure, tetramer of two alpha and two beta subunits.

The protein localises to the cytoplasm. The catalysed reaction is tRNA(Gly) + glycine + ATP = glycyl-tRNA(Gly) + AMP + diphosphate. The chain is Glycine--tRNA ligase alpha subunit from Pseudomonas syringae pv. tomato (strain ATCC BAA-871 / DC3000).